The following is a 624-amino-acid chain: DNA mismatch repair protein MutL (624 aa).

The interval 355–377 (EESAPERKLPEKTPEPSYSPMKL) is disordered. The span at 358–368 (APERKLPEKTP) shows a compositional bias: basic and acidic residues.

Belongs to the DNA mismatch repair MutL/HexB family.

This protein is involved in the repair of mismatches in DNA. It is required for dam-dependent methyl-directed DNA mismatch repair. May act as a 'molecular matchmaker', a protein that promotes the formation of a stable complex between two or more DNA-binding proteins in an ATP-dependent manner without itself being part of a final effector complex. This chain is DNA mismatch repair protein MutL, found in Bacillus velezensis (strain DSM 23117 / BGSC 10A6 / LMG 26770 / FZB42) (Bacillus amyloliquefaciens subsp. plantarum).